Reading from the N-terminus, the 671-residue chain is MESIEQQLTELRTTLRHHEYLYHVMDAPEIPDAEYDRLMRELCELETKHPELITPDSPTQRVGAAPLAAFSQIRHEVPMLSLDNVFDEESFLAFNKRVQDRLKNNEKVTWCCELKLDGLAVSILYENGVLVSAATRGDGTTGEDITSNVRTIRAIPLKLHGENIPARLEVRGEVFLPQAGFEKINEDARRTGGKVFANPRNAAAGSLRQLDPRITAKRPLTFFCYGVGVLEGGELPDTHLGRLLQFKKWGVPVSDRVTLCESAEEVLAFYHKVEEDRPTLGFDIDGVVIKVNSLEQQEQLGFVARAPRWAVAFKFPAQEQMTFVRDVEFQVGRTGAITPVARLEPVHVAGVLVSNATLHNADEIERLGLRIGDKVVIRRAGDVIPQVVNVVLSERPEDTREVVFPTHCPVCGSDVERVEGEAVARCTGGLICGAQRKESLKHFVSRRAMDVDGMGDKIIDQLVEKEYVHTPADLFKLTAGKLTGLERMGPKLAQNVVNALEKAKETTFARFLYALGIREVGEATAAGLAAYFGTLEALEAASIEELQKVPDVGIVVASHVHNFFAEESNRNVISELLAEGVHWPAPIVINAEEIDSPFAGKTVVLTGSLSQMSRDDAKARLVELGAKVAGSVSKKTDLVIAGEAAGSKLAKAQELGIEVIDEAEMLRLLGS.

Residues 32 to 36, 81 to 82, and E113 contribute to the NAD(+) site; these read DAEYD and SL. K115 acts as the N6-AMP-lysine intermediate in catalysis. Residues R136, E173, K290, and K314 each coordinate NAD(+). Residues C408, C411, C426, and C432 each contribute to the Zn(2+) site. The region spanning 593 to 671 is the BRCT domain; the sequence is EIDSPFAGKT…EAEMLRLLGS (79 aa).

Belongs to the NAD-dependent DNA ligase family. LigA subfamily. The cofactor is Mg(2+). Mn(2+) serves as cofactor.

It catalyses the reaction NAD(+) + (deoxyribonucleotide)n-3'-hydroxyl + 5'-phospho-(deoxyribonucleotide)m = (deoxyribonucleotide)n+m + AMP + beta-nicotinamide D-nucleotide.. Its function is as follows. DNA ligase that catalyzes the formation of phosphodiester linkages between 5'-phosphoryl and 3'-hydroxyl groups in double-stranded DNA using NAD as a coenzyme and as the energy source for the reaction. It is essential for DNA replication and repair of damaged DNA. This Shigella boydii serotype 4 (strain Sb227) protein is DNA ligase.